Reading from the N-terminus, the 331-residue chain is Induced myeloid leukemia cell differentiation protein Mcl-1 homolog (331 aa).

A PEST-like region spans residues 85–156 (LAVPPEEMAA…PPEEEEDDLY (72 aa)). The residue at position 102 (Ser102) is a Phosphoserine. Lys117 is covalently cross-linked (Glycyl lysine isopeptide (Lys-Gly) (interchain with G-Cter in ubiquitin)). Residues 130 to 154 (EAAKSSGADGSLPSTPPPPEEEEDD) are disordered. Residue Ser140 is modified to Phosphoserine; by GSK3-alpha and GSK3-beta. Ser143 is modified (phosphoserine). Position 144 is a phosphothreonine; by MAPK (Thr144). Glycyl lysine isopeptide (Lys-Gly) (interchain with G-Cter in ubiquitin) cross-links involve residues Lys175 and Lys178. A BH3 motif is present at residues 190–204 (ALETLRRVGDGVQRN). Residues 234 to 253 (VFKDGVTNWGRIVTLISFGA) carry the BH1 motif. The short motif at 285-300 (DWLVKQRGWDGFVEFF) is the BH2 element. The helical transmembrane segment at 308–330 (GIRNVLLAFAGVAGVGAGLAYLI) threads the bilayer.

This sequence belongs to the Bcl-2 family. Interacts with HIF3A isoform 2 (via C-terminus domain). Interacts with BAD, BOK, BIK, BAX, BAK1, and TPT1. Interacts with BBC3, BMF and PMAIP1. Interacts with BOP. Interacts with BCL2L11; this interaction may sequester BCL2L11 and prevent its pro-apoptotic activity. Interacts with GIMAP5 and HSPA8/HSC70; the interaction between HSPA8 and MCL1 is impaired in the absence of GIMAP5. Cleaved by CASP3 during apoptosis, yielding a pro-apoptotic C-terminal fragment. Post-translationally, rapidly degraded in the absence of phosphorylation in the PEST region. In terms of processing, phosphorylated on Ser-140, by GSK3, in response to IL3/interleukin-3 withdrawal. Phosphorylation at Ser-140 induces ubiquitination and proteasomal degradation, abrogating the anti-apoptotic activity. Treatment with taxol or okadaic acid induces phosphorylation on additional sites. Ubiquitinated. Ubiquitination is induced by phosphorylation at Ser-140. Deubiquitinated by USP20; leading to increased stability.

It localises to the membrane. It is found in the cytoplasm. The protein resides in the mitochondrion. Its subcellular location is the nucleus. The protein localises to the nucleoplasm. Its function is as follows. Involved in the regulation of apoptosis versus cell survival, and in the maintenance of viability but not of proliferation. Mediates its effects by interactions with a number of other regulators of apoptosis. Isoform 2 has antiapoptotic activity. The protein is Induced myeloid leukemia cell differentiation protein Mcl-1 homolog (Mcl1) of Mus musculus (Mouse).